The following is a 282-amino-acid chain: Acyl-CoA-binding domain-containing protein 6 (282 aa).

Polar residues predominate over residues 1–12; that stretch reads MASSFLPSGATT. Residues 1–34 form a disordered region; that stretch reads MASSFLPSGATTGDSGGELSSGDDSGDVESLQSP. Over residues 17–31 the composition is skewed to low complexity; that stretch reads GELSSGDDSGDVESL. Phosphoserine is present on Ser-41. Residues 42-127 form the ACB domain; the sequence is LPELFEKAAE…VKKLDPSWNP (86 aa). Residues 69 to 73 and Lys-95 each bind an acyl-CoA; that span reads YARYK. Ser-106 carries the phosphoserine modification. Tyr-114 serves as a coordination point for an acyl-CoA. ANK repeat units follow at residues 191–220 and 224–253; these read EGRT…DINC and EGQT…DPTL.

Monomer.

Its subcellular location is the cytoplasm. Binds long-chain acyl-coenzyme A molecules with a strong preference for unsaturated C18:1-CoA, lower affinity for unsaturated C20:4-CoA, and very weak affinity for saturated C16:0-CoA. Does not bind fatty acids. The protein is Acyl-CoA-binding domain-containing protein 6 (ACBD6) of Bos taurus (Bovine).